Consider the following 571-residue polypeptide: Glutamate--tRNA ligase (571 aa).

The 'HIGH' region signature appears at 110 to 120 (PNPNGPATLGS).

It belongs to the class-I aminoacyl-tRNA synthetase family. Glutamate--tRNA ligase type 2 subfamily.

Its subcellular location is the cytoplasm. It carries out the reaction tRNA(Glu) + L-glutamate + ATP = L-glutamyl-tRNA(Glu) + AMP + diphosphate. Its function is as follows. Catalyzes the attachment of glutamate to tRNA(Glu) in a two-step reaction: glutamate is first activated by ATP to form Glu-AMP and then transferred to the acceptor end of tRNA(Glu). The polypeptide is Glutamate--tRNA ligase (Methanosarcina barkeri (strain Fusaro / DSM 804)).